Consider the following 299-residue polypeptide: Delta-9 desaturase-like 3 protein (299 aa).

The next 2 membrane-spanning stretches (helical) occupy residues 38–57 (AVGAVHLLCLLAPFNYTWEA) and 58–76 (FRFAAMVGISTNLSITFSY). The short motif at 77–82 (HRNLTH) is the Histidine box-1 element. A Histidine box-2 motif is present at residues 114-118 (HRFHH). Helical transmembrane passes span 174-194 (IGLHILTFWILVYLWGGLPYL) and 198-218 (VGVGGAIGYHATWLINSACHI). The Histidine box-3 signature appears at 246-250 (HNNHH). The helical transmembrane segment at 262–282 (WYQVDLTWYLIWFFQVLGLAT) threads the bilayer.

This sequence belongs to the fatty acid desaturase type 1 family. Fe cation serves as cofactor.

The protein resides in the endoplasmic reticulum membrane. It participates in lipid metabolism; polyunsaturated fatty acid biosynthesis. In Arabidopsis thaliana (Mouse-ear cress), this protein is Delta-9 desaturase-like 3 protein.